The chain runs to 261 residues: Triosephosphate isomerase (261 aa).

10 to 12 contacts substrate; sequence NWK. Histidine 100 (electrophile) is an active-site residue. Glutamate 172 (proton acceptor) is an active-site residue. Residues glycine 178, serine 218, and 239 to 240 contribute to the substrate site; that span reads GG.

The protein belongs to the triosephosphate isomerase family. As to quaternary structure, homodimer.

It is found in the cytoplasm. The catalysed reaction is D-glyceraldehyde 3-phosphate = dihydroxyacetone phosphate. Its pathway is carbohydrate biosynthesis; gluconeogenesis. It participates in carbohydrate degradation; glycolysis; D-glyceraldehyde 3-phosphate from glycerone phosphate: step 1/1. Functionally, involved in the gluconeogenesis. Catalyzes stereospecifically the conversion of dihydroxyacetone phosphate (DHAP) to D-glyceraldehyde-3-phosphate (G3P). The polypeptide is Triosephosphate isomerase (Mycolicibacterium vanbaalenii (strain DSM 7251 / JCM 13017 / BCRC 16820 / KCTC 9966 / NRRL B-24157 / PYR-1) (Mycobacterium vanbaalenii)).